The chain runs to 272 residues: Acidic leucine-rich nuclear phosphoprotein 32 family member B (272 aa).

LRR repeat units follow at residues 16 to 40 (PAAV…LTDE), 43 to 64 (NLEF…PKLP), 65 to 84 (KLKK…DRLA), and 89 to 110 (SLTH…EPLK). Residues 123–161 (CEVTNRSDYRETVFRLLPQLSYLDGYDREDQEAPDSDVE) form the LRRCT domain. A compositionally biased stretch (acidic residues) spans 149-254 (DREDQEAPDS…DEDEDEEEEE (106 aa)). The segment at 149-272 (DREDQEAPDS…RETDDEGEDD (124 aa)) is disordered. Phosphoserine is present on residues S164 and S171. Residues 255 to 265 (SGKGEKRKRET) are compositionally biased toward basic and acidic residues. Residues 260–263 (KRKR) carry the Nuclear localization signal motif. The residue at position 265 (T265) is a Phosphothreonine.

The protein belongs to the ANP32 family. Interacts with histones H3 and H4. Interacts with KLF5; this interaction induces promoter region-specific histone incorporation and inhibition of histone acetylation by ANP32B. In terms of processing, some glutamate residues are glycylated by TTLL8. This modification occurs exclusively on glutamate residues and results in a glycine chain on the gamma-carboxyl group. Directly cleaved by caspase-3/CASP3. As to expression, predominantly expressed in brain. Expressed in the entire embryonic brain, whereas in the adult brain its expression is restricted to the subventricular zone where there are neural progenitor cells.

The protein resides in the nucleus. Functionally, multifunctional protein that is involved in the regulation of many processes including cell proliferation, apoptosis, cell cycle progression or transcription. Regulates the proliferation of neuronal stem cells, differentiation of leukemic cells and progression from G1 to S phase of the cell cycle. As negative regulator of caspase-3-dependent apoptosis, may act as an antagonist of ANP32A in regulating tissue homeostasis. Exhibits histone chaperone properties, able to recruit histones to certain promoters, thus regulating the transcription of specific genes. Also plays an essential role in the nucleocytoplasmic transport of specific mRNAs via the uncommon nuclear mRNA export receptor XPO1/CRM1. Participates in the regulation of adequate adaptive immune responses by acting on mRNA expression and cell proliferation. The sequence is that of Acidic leucine-rich nuclear phosphoprotein 32 family member B (Anp32b) from Rattus norvegicus (Rat).